The primary structure comprises 417 residues: Interferon-gamma-inducible GTPase 10 (417 aa).

Gly2 carries the N-myristoyl glycine lipid modification. Residues 67 to 249 (APLNIAVTGE…PSLESTLLEE (183 aa)) form the IRG-type G domain. Gly78, Ala79, Ser82, Thr83, Ser101, Lys183, Asp185, and Ser231 together coordinate GDP. A run of 2 helical transmembrane segments spans residues 284–302 (EALKAGASATIPMMSFFND) and 370–387 (AVTGGFVATGLYFRKSYY).

It belongs to the TRAFAC class dynamin-like GTPase superfamily. GB1/RHD3 GTPase family. GB1 subfamily. As to quaternary structure, homooligomer; homooligomerization occurs upon GTP-binding and is required for the association with membranous structures. Homodimer; GDP-binding induces formation of an inactive head-to-head homodimer. In terms of processing, myristoylation is required for localization to pathogen-containing vacuoles. Post-translationally, (Microbial infection) Phosphorylated by Toxoplasma gondii ROP18.

It localises to the membrane. It is found in the cytoplasmic vesicle membrane. The catalysed reaction is GTP + H2O = GDP + phosphate + H(+). Functionally, interferon (IFN)-inducible GTPase that plays important roles in innate immunity against a diverse range of bacterial, viral and protozoan pathogens by mediating cytosolic release of pathogenic ligands that activate the inflammasomes. Following infection, recruited to the membrane of pathogens in a GBP-dependent manner and mediates disruption of the pathogen membrane, liberating ligands that are detected by inflammasomes, such as lipopolysaccharide (LPS) that activates the non-canonical CASP4/CASP11 inflammasome or double-stranded DNA (dsDNA) that activates the AIM2 inflammasome. Promotes AIM2 and NLRP3 inflammasome activation following A.fumigatus infection by liberating beta-glucan, which directly triggers inflammasome assembly. Promotes NLRP3 inflammasome activation following influenza A virus infection. The sequence is that of Interferon-gamma-inducible GTPase 10 from Mus musculus (Mouse).